Reading from the N-terminus, the 243-residue chain is MAPCKYTPERVQMMWDAIAYNDSRRLAFMTDRPRWVHAHNFFDSAAQLFAYIVKNSISDVHVKPLEEGGREWVIDADFKDCADKAELMLKVNVGATAFMLFFEGKEDAVQRIMFSGNRGFHLWLKFCGKFKMDAPKSLREHWFNVFKQPAKLVSGDIRPGSFADCVRRAVHMYIGDAREDLVLRYWPDVDRDVFCNANKQIRAPFSYNYKGGDYSRCLTQQLQQRIKACSAGCLAGGTPPTSK.

The protein belongs to the baculoviridae LEF-1 family.

Functionally, required for late and very late gene expression. In Orgyia pseudotsugata multicapsid polyhedrosis virus (OpMNPV), this protein is Late expression factor 1 (LEF-1).